Consider the following 363-residue polypeptide: Lipase (363 aa).

The N-terminal stretch at 1–24 (MVLKQRANYLGFLIVFFTAFLVEA) is a signal peptide. A propeptide spanning residues 25–94 (VPIKRQSNST…SYPDSVVQAM (70 aa)) is cleaved from the precursor. The tract at residues 33-69 (STVDSLPPLIPSRTSAPSSSPSTTDPEAPAMSRNGPL) is disordered. Positions 43 to 62 (PSRTSAPSSSPSTTDPEAPA) are enriched in low complexity. 3 disulfide bridges follow: Cys-123-Cys-362, Cys-134-Cys-137, and Cys-329-Cys-338. Residue Ser-238 is the Nucleophile of the active site. The active-site Charge relay system is Asp-297. Asp-350 serves as a coordination point for Ca(2+). The active-site Charge relay system is the His-351.

The protein belongs to the AB hydrolase superfamily. Lipase family.

The catalysed reaction is a triacylglycerol + H2O = a diacylglycerol + a fatty acid + H(+). This chain is Lipase, found in Rhizomucor miehei.